Here is a 502-residue protein sequence, read N- to C-terminus: Tyrosine-protein kinase receptor old-1 (502 aa).

Positions 1 to 19 (MKGTLIFVVFYSSYGFAHC) are cleaved as a signal peptide. Residues 20–58 (NTILRSSSLSRNFEDSLRRIPRSTDKDETGFEDSNVQEV) are Extracellular-facing. Residues 59–79 (IFILLYCLFVALAILICGLII) traverse the membrane as a helical segment. The Cytoplasmic portion of the chain corresponds to 80–502 (FYNSRKRELR…WLSDEKHCDS (423 aa)). A disordered region spans residues 99-140 (LLEPTSADHKRRNSSNIVPPEPTPYPITSGESDLRQTPSRLS). A compositionally biased stretch (polar residues) spans 127 to 140 (SGESDLRQTPSRLS). Residues 175–473 (ISKGRPLGSG…ELKTTSNEYF (299 aa)) enclose the Protein kinase domain. ATP is bound by residues 181-189 (LGSGEFGII) and Lys213. Asp321 acts as the Proton acceptor in catalysis.

Belongs to the protein kinase superfamily. Tyr protein kinase family.

Its subcellular location is the cell membrane. The enzyme catalyses L-tyrosyl-[protein] + ATP = O-phospho-L-tyrosyl-[protein] + ADP + H(+). Its function is as follows. Receptor tyrosine kinase which plays a role in promoting longevity and resistance to stresses including UV irradiation and high temperatures, probably downstream of daf-16. This chain is Tyrosine-protein kinase receptor old-1, found in Caenorhabditis elegans.